Here is a 214-residue protein sequence, read N- to C-terminus: uncharacterized protein (214 aa).

It belongs to the uracil-DNA glycosylase (UDG) superfamily.

This is an uncharacterized protein from Haemophilus influenzae (strain ATCC 51907 / DSM 11121 / KW20 / Rd).